We begin with the raw amino-acid sequence, 148 residues long: UPF0179 protein Mevan_0979 (148 aa).

It belongs to the UPF0179 family.

The protein is UPF0179 protein Mevan_0979 of Methanococcus vannielii (strain ATCC 35089 / DSM 1224 / JCM 13029 / OCM 148 / SB).